The chain runs to 1226 residues: Polyamine-transporting ATPase 13A3 (1226 aa).

Topologically, residues 1 to 28 (MDREERKTINQGQEDEMEIYGYNLSRWK) are cytoplasmic. An intramembrane segment occupies 29-49 (LAIVSLGVICSGGFLLLLLYW). At 50–205 (MPEWRVKATC…IAVKVPSVFK (156 aa)) the chain is on the cytoplasmic side. S98 bears the Phosphoserine mark. A helical transmembrane segment spans residues 206–226 (LLIKEVLNPFYIFQLFSVILW). The Lumenal portion of the chain corresponds to 227 to 232 (STDEYY). A helical transmembrane segment spans residues 233 to 253 (YYALAIVVMSIVSIVSSLYSI). The Cytoplasmic portion of the chain corresponds to 254-409 (RKQYVMLHDM…KPTDFKLYRD (156 aa)). The helical transmembrane segment at 410 to 430 (AYLFLLCLVAVAGIGFIYTII) threads the bilayer. Residues 431-448 (NSILNEVQVGVIIIESLD) lie on the Lumenal side of the membrane. Residues 449 to 469 (IITITVPPALPAAMTAGIVYA) traverse the membrane as a helical segment. The Cytoplasmic segment spans residues 470–940 (QRRLKKIGIF…ALITSFCVFK (471 aa)). D498 (4-aspartylphosphate intermediate) is an active-site residue. 2 residues coordinate Mg(2+): D498 and T500. ATP-binding positions include 498 to 500 (DKT), F628, R684, and D750. A Phosphoserine modification is found at S817. Mg(2+) contacts are provided by D883 and D887. 883–887 (DGAND) provides a ligand contact to ATP. A helical membrane pass occupies residues 941–961 (FMALYSIIQYFSVTLLYSILS). Position 962 (N962) is a topological domain, lumenal. Residues 963–983 (LGDFQFLFIDLAIILVVVFTM) form a helical membrane-spanning segment. The Cytoplasmic portion of the chain corresponds to 984 to 999 (SLNPAWKELVAQRPPS). A helical transmembrane segment spans residues 1000-1020 (GLISGALLFSVLSQIIICIGF). At 1021–1073 (QSLGFFWVKQQPWYEVWHPKSDACNTTGSGFWNSSHVDNETELDEHNIQNYEN) the chain is on the lumenal side. Residues 1074–1094 (TTVFFISSFQYLIVAIAFSKG) form a helical membrane-spanning segment. At 1095–1105 (KPFRQPCYKNY) the chain is on the cytoplasmic side. Residues 1106 to 1126 (FFVFSVIFLYIFILFIMLYPV) traverse the membrane as a helical segment. Topologically, residues 1127-1143 (ASVDQVLQIVCVPYQWR) are lumenal. A helical transmembrane segment spans residues 1144 to 1164 (VTMLIIVLVNAFVSITVEESV). Residues 1165-1226 (DRWGKCCLPW…NGSCQIITIT (62 aa)) are Cytoplasmic-facing.

It belongs to the cation transport ATPase (P-type) (TC 3.A.3) family. Type V subfamily. Broadly expressed.

It is found in the recycling endosome membrane. Its subcellular location is the early endosome membrane. It localises to the late endosome membrane. It carries out the reaction putrescine(out) + ATP + H2O = putrescine(in) + ADP + phosphate + H(+). Its function is as follows. ATP-driven pump involved in endocytosis-dependent polyamine transport. Uses ATP as an energy source to transfer polyamine precursor putrescine from the endosomal compartment to the cytosol. The polypeptide is Polyamine-transporting ATPase 13A3 (Homo sapiens (Human)).